We begin with the raw amino-acid sequence, 378 residues long: Mannitol-1-phosphate 5-dehydrogenase (378 aa).

4-15 (SVHFGAGNIGRG) serves as a coordination point for NAD(+).

It belongs to the mannitol dehydrogenase family.

It carries out the reaction D-mannitol 1-phosphate + NAD(+) = beta-D-fructose 6-phosphate + NADH + H(+). This is Mannitol-1-phosphate 5-dehydrogenase from Streptococcus pneumoniae (strain 70585).